A 97-amino-acid polypeptide reads, in one-letter code: uncharacterized protein (97 aa).

This is an uncharacterized protein from Salmonella typhi.